A 759-amino-acid chain; its full sequence is 1,4-alpha-glucan branching enzyme GlgB (759 aa).

Catalysis depends on aspartate 431, which acts as the Nucleophile. Glutamate 484 functions as the Proton donor in the catalytic mechanism.

It belongs to the glycosyl hydrolase 13 family. GlgB subfamily. In terms of assembly, monomer.

The catalysed reaction is Transfers a segment of a (1-&gt;4)-alpha-D-glucan chain to a primary hydroxy group in a similar glucan chain.. It functions in the pathway glycan biosynthesis; glycogen biosynthesis. Catalyzes the formation of the alpha-1,6-glucosidic linkages in glycogen by scission of a 1,4-alpha-linked oligosaccharide from growing alpha-1,4-glucan chains and the subsequent attachment of the oligosaccharide to the alpha-1,6 position. The sequence is that of 1,4-alpha-glucan branching enzyme GlgB from Prochlorococcus marinus (strain MIT 9211).